Reading from the N-terminus, the 918-residue chain is Whirlin (918 aa).

In terms of domain architecture, PDZ 1 spans 141 to 224 (LVSLRRAKAH…LVLSVYSAGR (84 aa)). The interval 240–266 (PQGRSTSPPSSLPQPHGSTLRQREDDR) is disordered. A PDZ 2 domain is found at 280-362 (KVNLVLGDGR…LILTVKDVGR (83 aa)). 3 disordered regions span residues 387-407 (NSAG…GFYK), 503-538 (SMKA…TSTT), and 560-824 (EGTG…LEPT). Residues 522–538 (SYSDTGSSTGSHGTSTT) are compositionally biased toward low complexity. Residues 563–572 (GETTQGSTNA) are compositionally biased toward polar residues. Pro residues-rich tracts occupy residues 591-600 (IKPPPPPPPL) and 638-649 (RSPPPGTAPTPG). The span at 654-672 (QDSPSSPIYASISHANPSS) shows a compositional bias: polar residues. Position 696 is a phosphoserine (Ser-696). Composition is skewed to polar residues over residues 754-773 (QTRT…TLSE) and 783-798 (EAST…SAKN). Positions 800–811 (NGKEQPRTERTA) are enriched in basic and acidic residues. Residues 827 to 910 (LVRVRKSAAT…TKERDYIDFL (84 aa)) form the PDZ 3 domain.

In terms of assembly, forms homooligomers. Interacts (via C-terminal PDZ domain) with MYO15A; this interaction is necessary for localization of WHRN to stereocilia tips. Interacts (via C-terminal PDZ domain) with MPP1/p55. Interacts with LRRC4C/NGL1. Interacts with MYO7A. Interacts with RPGR. Interacts with EPS8. Interacts with CASK. Interacts with CIB2. Component of USH2 complex, composed of ADGRV1, PDZD7, USH2A and WHRN. Interacts (via PDZ domains) with PDZD7; the interaction is direct. Interacts (via N-terminal PDZ domain) with USH2A (via cytoplasmic region). Interacts with ADGRV1/MASS1 (via cytoplasmic region). Expressed in the retina. Colocalizes with RPGR in the photoreceptor connecting cilium, a thin bridge linking the cell body and the light-sensing outer segment (at protein level). Detected in the inner ear throughout development from embryonic day 12 to 20 days after birth. Displays a dynamic pattern of expression after birth, demonstrating an ordered appearance and fade-out across stereocilia rows. Isoforms 5, 6, 7 and 8 are not detected in the retina.

The protein resides in the cytoplasm. The protein localises to the cell projection. It localises to the stereocilium. Its subcellular location is the growth cone. It is found in the photoreceptor inner segment. The protein resides in the synapse. Its function is as follows. Involved in hearing and vision as member of the USH2 complex. Necessary for elongation and maintenance of inner and outer hair cell stereocilia in the organ of Corti in the inner ear. Involved in the maintenance of the hair bundle ankle region, which connects stereocilia in cochlear hair cells of the inner ear. In retina photoreceptors, required for the maintenance of periciliary membrane complex that seems to play a role in regulating intracellular protein transport. This Mus musculus (Mouse) protein is Whirlin.